Reading from the N-terminus, the 263-residue chain is MSSNFRHQLLSLSLLVGIAAPWAAFAQAPISSVGSGSVEDRVTQLERISNAHSQLLTQLQQQLSDNQSDIDSLRGQIQENQYQLNQVVERQKQILLQIDSLSSGGAAAQSTSGDQSGAAASTTPTADAGTANAGAPVKSGNANTDYNAAIALVQDKSRQDDAMVAFQNFIKNYPDSTYLPNANYWLGQLNYNKGKKDDAAYYFASVVKNYPKSPKAADAMFKVGVIMQDKGDTAKAKAVYQQVISKYPGTDGAKQAQKRLNAM.

A signal peptide spans 1–26; sequence MSSNFRHQLLSLSLLVGIAAPWAAFA. Residues 44-88 adopt a coiled-coil conformation; it reads QLERISNAHSQLLTQLQQQLSDNQSDIDSLRGQIQENQYQLNQVV. Residues 106–123 are compositionally biased toward low complexity; that stretch reads AAAQSTSGDQSGAAASTT. The tract at residues 106 to 139 is disordered; sequence AAAQSTSGDQSGAAASTTPTADAGTANAGAPVKS. 3 TPR repeats span residues 143 to 176, 180 to 213, and 217 to 250; these read NTDY…YPDS, PNAN…YPKS, and ADAM…YPGT.

Belongs to the CpoB family. In terms of assembly, homotrimer. Interacts directly with the central domain of TolA and with PBP1B. Binding to TolA disrupts the homotrimer to form a YbgF/TolA heterodimer with weak affinity. Forms a quaternary complex with PBP1B-LpoB and TolA.

Its subcellular location is the periplasm. Its function is as follows. Mediates coordination of peptidoglycan synthesis and outer membrane constriction during cell division. Promotes physical and functional coordination of the PBP1B-LpoB and Tol machines, and regulates PBP1B activity in response to Tol energy state. In Escherichia coli (strain K12), this protein is Cell division coordinator CpoB.